The chain runs to 138 residues: Protein PsiE homolog (138 aa).

4 helical membrane passes run Tyr12 to Ile34, Tyr56 to Ile76, His84 to Ile104, and Ala109 to Ala129.

It belongs to the PsiE family.

It is found in the cell membrane. The chain is Protein PsiE homolog from Bacillus subtilis (strain 168).